A 237-amino-acid polypeptide reads, in one-letter code: Uridylate kinase (237 aa).

ATP is bound at residue 10-13 (KLSG). A UMP-binding site is contributed by glycine 51. ATP is bound by residues glycine 52 and arginine 56. UMP-binding positions include aspartate 71 and 132–139 (MGMPFFST). Asparagine 160, tyrosine 166, and aspartate 169 together coordinate ATP.

Belongs to the UMP kinase family. Homohexamer.

The protein resides in the cytoplasm. The catalysed reaction is UMP + ATP = UDP + ADP. Its pathway is pyrimidine metabolism; CTP biosynthesis via de novo pathway; UDP from UMP (UMPK route): step 1/1. Inhibited by UTP. Catalyzes the reversible phosphorylation of UMP to UDP. This chain is Uridylate kinase, found in Nocardioides sp. (strain ATCC BAA-499 / JS614).